A 330-amino-acid polypeptide reads, in one-letter code: Polygalacturonase inhibitor 2 (330 aa).

Residues 1 to 21 (MDKTMTLFLLLSTLLLTTSLA) form the signal peptide. 2 disulfide bridges follow: Cys25/Cys55 and Cys56/Cys63. LRR repeat units follow at residues 69-93 (NHRVTSLIIQDGEISGQIPPEVGDL), 94-117 (PYLTSLIFRKLTNLTGHIQPTIAK), 118-141 (LKNLTFLRLSWTNLTGPVPEFLSQ), 142-166 (LKNLEYIDLSFNDLSGSIPSSLSSL), 167-192 (RKLEYLELSRNKLTGPIPESFGTFSG), 194-215 (VPSLFLSHNQLSGTIPKSLGNP), 217-237 (FYRIDLSRNKLQGDASILFGA), 238-260 (KKTTWIVDISRNMFQFDLSKVKL), 261-285 (AKTLNNLDMNHNGITGSIPAEWSKA), and 287-308 (FQLLNVSYNRLCGRIPKGEYIQ). 3 N-linked (GlcNAc...) asparagine glycosylation sites follow: Asn106, Asn120, and Asn130. Asn291 carries an N-linked (GlcNAc...) asparagine glycan. 2 disulfide bridges follow: Cys298/Cys320 and Cys322/Cys329.

Belongs to the polygalacturonase-inhibiting protein family.

Its subcellular location is the secreted. It is found in the cell wall. The protein localises to the membrane. Its function is as follows. Inhibitor of fungal polygalacturonase. It is an important factor for plant resistance to phytopathogenic fungi. The sequence is that of Polygalacturonase inhibitor 2 (PGIP2) from Arabidopsis thaliana (Mouse-ear cress).